Consider the following 244-residue polypeptide: UPF0173 metal-dependent hydrolase RoseRS_3945 (244 aa).

This sequence belongs to the UPF0173 family.

This chain is UPF0173 metal-dependent hydrolase RoseRS_3945, found in Roseiflexus sp. (strain RS-1).